The primary structure comprises 411 residues: Putative competence-damage inducible protein (411 aa).

Belongs to the CinA family.

This Caldicellulosiruptor saccharolyticus (strain ATCC 43494 / DSM 8903 / Tp8T 6331) protein is Putative competence-damage inducible protein.